The chain runs to 170 residues: Probable Brix domain-containing ribosomal biogenesis protein (170 aa).

Residues 6-170 (TRIVITSSRD…IKFLKMILEA (165 aa)) form the Brix domain.

Probably involved in the biogenesis of the ribosome. This is Probable Brix domain-containing ribosomal biogenesis protein from Saccharolobus solfataricus (strain ATCC 35092 / DSM 1617 / JCM 11322 / P2) (Sulfolobus solfataricus).